We begin with the raw amino-acid sequence, 353 residues long: Hydrazine synthase subunit gamma (353 aa).

Residues 1–39 form the signal peptide; the sequence is MAREMRLGGKERMKTGVVKIGLVAALGVVGLISAGGVYA. Positions 102, 105, and 106 each coordinate heme c. The Ca(2+) site is built by Asp-118, Leu-119, Glu-122, Gly-123, Ser-126, Asn-129, Leu-139, and Pro-141. 4 residues coordinate heme c: Cys-165, Cys-225, Cys-228, and His-229. The Cytochrome c domain maps to 209–353; sequence EAQKRGQKIF…QDLVEYLKAL (145 aa). Residues Asp-296, Ser-306, Gly-307, and Thr-308 each contribute to the Ca(2+) site. Residue His-332 coordinates heme c.

As to quaternary structure, part of the hydrazine synthase complex that forms an elongated dimer of heterotrimers composed of one alpha, one beta and one gamma subunit. Requires heme c as cofactor.

It is found in the anammoxosome. It carries out the reaction hydrazine + 3 Fe(III)-[cytochrome c] + H2O = nitric oxide + 3 Fe(II)-[cytochrome c] + NH4(+) + 2 H(+). Its pathway is nitrogen metabolism. Functionally, component of the hydrazine synthase complex that catalyzes the condensation of nitric oxide (NO) with ammonium to form hydrazine. The gamma subunit catalyzes the first half-reaction, i.e. the three-electron reduction of nitric oxide to hydroxylamine; it may obtain electrons from the triheme cytochrome c kuste2854. Is involved in anaerobic ammonium oxidation (anammox), a biological process in which nitrite is used as the electron acceptor in the conversion of ammonium to dinitrogen gas (N2) and water; this bacterial process has a major role in the Earth's nitrogen cycle and has been estimated to synthesize up to 50% of the dinitrogen gas emitted into our atmosphere from the oceans. The protein is Hydrazine synthase subunit gamma of Kuenenia stuttgartiensis.